A 344-amino-acid chain; its full sequence is MPPSSLAEYLAKKYLTADPATDRPKKKRKKTKTVDTAGDGLIIADDDPPDLRTSATNFDNEDDEGPSLVTSVRSAEFRRAKKSNWRTVGGPATGSSNANDERDAADAILASAAAESAARRGEGEGGDDEAPAVVDEADADDGGELRMESGARAGLQTAEQTAAMVAAQERRKKAEAARHRERPAEAQETIYRDASGRIINVALKRAEARRAEQEKREKEEAAKEALMGDVQRAEREARRQQIQEARAMPLARTIEDDALNEELKAQQRWNDPAAGFLTKTKGPGVSVTGKPLYKGAFQPNRYGIRPGHRWDGVDRGNGFEKEWFAARNKKGRLEALDYQWQMDE.

Disordered regions lie at residues 14–189 (YLTA…AQET) and 211–242 (AEQE…RQQI). The segment covering 106–116 (DAILASAAAES) has biased composition (low complexity). Acidic residues predominate over residues 124 to 142 (EGGDDEAPAVVDEADADDG). Residues 156 to 246 (QTAEQTAAMV…ARRQQIQEAR (91 aa)) adopt a coiled-coil conformation. 3 stretches are compositionally biased toward basic and acidic residues: residues 168–189 (QERR…AQET), 211–223 (AEQE…EAAK), and 231–241 (QRAEREARRQQ).

Belongs to the CWC26 family. As to quaternary structure, associated with the spliceosome.

It localises to the cytoplasm. The protein localises to the nucleus. In terms of biological role, involved in pre-mRNA splicing. This chain is Pre-mRNA-splicing factor cwc26 (cwc26), found in Aspergillus fumigatus (strain ATCC MYA-4609 / CBS 101355 / FGSC A1100 / Af293) (Neosartorya fumigata).